Consider the following 140-residue polypeptide: Protein ARABIDOPSIS THALIANA ANTHER 7 (140 aa).

A signal peptide spans 1–20 (MKIHAILVVAFLVLMKTAVS). Cystine bridges form between cysteine 29-cysteine 87, cysteine 39-cysteine 54, cysteine 55-cysteine 111, and cysteine 85-cysteine 125.

This sequence belongs to the plant LTP family. As to expression, tapetum-specific. Also present in pollen.

It is found in the endoplasmic reticulum lumen. This is Protein ARABIDOPSIS THALIANA ANTHER 7 from Arabidopsis thaliana (Mouse-ear cress).